A 184-amino-acid polypeptide reads, in one-letter code: uncharacterized protein (184 aa).

The signal sequence occupies residues 1-20 (MTLRKILALTCLLLPMMASA).

This sequence to H.influenzae HI_0045.

It is found in the periplasm. This is an uncharacterized protein from Escherichia coli (strain K12).